We begin with the raw amino-acid sequence, 218 residues long: Probable chemoreceptor glutamine deamidase CheD (218 aa).

Belongs to the CheD family.

The catalysed reaction is L-glutaminyl-[protein] + H2O = L-glutamyl-[protein] + NH4(+). Its function is as follows. Probably deamidates glutamine residues to glutamate on methyl-accepting chemotaxis receptors (MCPs), playing an important role in chemotaxis. This Saccharophagus degradans (strain 2-40 / ATCC 43961 / DSM 17024) protein is Probable chemoreceptor glutamine deamidase CheD.